Here is a 341-residue protein sequence, read N- to C-terminus: Anthranilate phosphoribosyltransferase (341 aa).

5-phospho-alpha-D-ribose 1-diphosphate contacts are provided by residues Gly80, Gly83 to Asp84, Thr88, Asn90 to Thr93, Lys108 to Ser116, and Ser120. Gly80 contacts anthranilate. Residue Ser92 participates in Mg(2+) binding. Asn111 lines the anthranilate pocket. Arg166 lines the anthranilate pocket. The Mg(2+) site is built by Asp225 and Glu226.

It belongs to the anthranilate phosphoribosyltransferase family. Homodimer. The cofactor is Mg(2+).

The catalysed reaction is N-(5-phospho-beta-D-ribosyl)anthranilate + diphosphate = 5-phospho-alpha-D-ribose 1-diphosphate + anthranilate. It participates in amino-acid biosynthesis; L-tryptophan biosynthesis; L-tryptophan from chorismate: step 2/5. Catalyzes the transfer of the phosphoribosyl group of 5-phosphorylribose-1-pyrophosphate (PRPP) to anthranilate to yield N-(5'-phosphoribosyl)-anthranilate (PRA). The chain is Anthranilate phosphoribosyltransferase from Roseiflexus sp. (strain RS-1).